A 428-amino-acid chain; its full sequence is Putative aspergillopepsin A-like aspartic endopeptidase AFUA_2G15950 (428 aa).

The first 19 residues, 1–19, serve as a signal peptide directing secretion; sequence MHSLQSFLFLLLLGYGVFA. A propeptide spans 20-90 (activation peptide); the sequence is APTSPQAQSQ…GTAANLVTDV (71 aa). The region spanning 110-425 is the Peptidase A1 domain; it reads FVSPVTIGGQ…DLRGPSIGLA (316 aa). Residue aspartate 126 is part of the active site. Residue asparagine 276 is glycosylated (N-linked (GlcNAc...) asparagine). The active site involves aspartate 312. N-linked (GlcNAc...) asparagine glycosylation is present at asparagine 380.

Belongs to the peptidase A1 family.

The protein localises to the secreted. The polypeptide is Putative aspergillopepsin A-like aspartic endopeptidase AFUA_2G15950 (Aspergillus fumigatus (strain ATCC MYA-4609 / CBS 101355 / FGSC A1100 / Af293) (Neosartorya fumigata)).